A 98-amino-acid chain; its full sequence is snRNA-activating protein complex subunit 5 (98 aa).

The disordered stretch occupies residues 75–98; it reads ALELSTRSHVQEEEEEEEEEEEDS. Residues 86-98 are compositionally biased toward acidic residues; that stretch reads EEEEEEEEEEEDS.

Part of the SNAPc complex composed of 5 subunits: SNAPC1, SNAPC2, SNAPC3, SNAPC4 and SNAPC5. SNAPC5 interacts with SNAPC4.

It localises to the nucleus. Functionally, part of the SNAPc complex required for the transcription of both RNA polymerase II and III small-nuclear RNA genes. Binds to the proximal sequence element (PSE), a non-TATA-box basal promoter element common to these 2 types of genes. Recruits TBP and BRF2 to the U6 snRNA TATA box. This chain is snRNA-activating protein complex subunit 5 (SNAPC5), found in Bos taurus (Bovine).